We begin with the raw amino-acid sequence, 236 residues long: Demethylmenaquinone methyltransferase (236 aa).

Residues Thr-58, Asp-79, and 106 to 107 (NA) contribute to the S-adenosyl-L-methionine site.

The protein belongs to the class I-like SAM-binding methyltransferase superfamily. MenG/UbiE family.

The catalysed reaction is a 2-demethylmenaquinol + S-adenosyl-L-methionine = a menaquinol + S-adenosyl-L-homocysteine + H(+). It functions in the pathway quinol/quinone metabolism; menaquinone biosynthesis; menaquinol from 1,4-dihydroxy-2-naphthoate: step 2/2. In terms of biological role, methyltransferase required for the conversion of demethylmenaquinol (DMKH2) to menaquinol (MKH2). This chain is Demethylmenaquinone methyltransferase, found in Alkalihalophilus pseudofirmus (strain ATCC BAA-2126 / JCM 17055 / OF4) (Bacillus pseudofirmus).